We begin with the raw amino-acid sequence, 373 residues long: Chaperone protein DnaJ (373 aa).

Residues 4 to 69 enclose the J domain; that stretch reads DYYETLSVER…SKRRIYDTYG (66 aa). The CR-type zinc finger occupies 131–209; sequence GVSKEVKLSR…CHGEGLVKKT (79 aa). Positions 144, 147, 161, 164, 183, 186, 197, and 200 each coordinate Zn(2+). CXXCXGXG motif repeat units follow at residues 144–151, 161–168, 183–190, and 197–204; these read CWTCEGTG, CPTCNGRG, CPECEGEG, and CNDCHGEG.

This sequence belongs to the DnaJ family. In terms of assembly, homodimer. Zn(2+) is required as a cofactor.

It is found in the cytoplasm. In terms of biological role, participates actively in the response to hyperosmotic and heat shock by preventing the aggregation of stress-denatured proteins and by disaggregating proteins, also in an autonomous, DnaK-independent fashion. Unfolded proteins bind initially to DnaJ; upon interaction with the DnaJ-bound protein, DnaK hydrolyzes its bound ATP, resulting in the formation of a stable complex. GrpE releases ADP from DnaK; ATP binding to DnaK triggers the release of the substrate protein, thus completing the reaction cycle. Several rounds of ATP-dependent interactions between DnaJ, DnaK and GrpE are required for fully efficient folding. Also involved, together with DnaK and GrpE, in the DNA replication of plasmids through activation of initiation proteins. The polypeptide is Chaperone protein DnaJ (Desulfotalea psychrophila (strain LSv54 / DSM 12343)).